A 274-amino-acid polypeptide reads, in one-letter code: 3-methyl-2-oxobutanoate hydroxymethyltransferase (274 aa).

Mg(2+)-binding residues include Asp50 and Asp89. Residues 50–51, Asp89, and Lys119 each bind 3-methyl-2-oxobutanoate; that span reads DS. Residue Glu121 coordinates Mg(2+). Residue Glu188 is the Proton acceptor of the active site.

The protein belongs to the PanB family. As to quaternary structure, homodecamer; pentamer of dimers. Mg(2+) is required as a cofactor.

The protein resides in the cytoplasm. The enzyme catalyses 3-methyl-2-oxobutanoate + (6R)-5,10-methylene-5,6,7,8-tetrahydrofolate + H2O = 2-dehydropantoate + (6S)-5,6,7,8-tetrahydrofolate. Its pathway is cofactor biosynthesis; (R)-pantothenate biosynthesis; (R)-pantoate from 3-methyl-2-oxobutanoate: step 1/2. In terms of biological role, catalyzes the reversible reaction in which hydroxymethyl group from 5,10-methylenetetrahydrofolate is transferred onto alpha-ketoisovalerate to form ketopantoate. The sequence is that of 3-methyl-2-oxobutanoate hydroxymethyltransferase from Methylorubrum extorquens (strain PA1) (Methylobacterium extorquens).